A 273-amino-acid polypeptide reads, in one-letter code: MERSVFFISDGTAITAEVVGHSVLSQFPLTTALYTLPFVESETRARAVREQINALYQQSGVRPLVFYSIVTPAVRHIIEESAGFCQDVVQALVGPLQQELGIAPDPVAHRTHGLTATNLSKYDARITAIDYTLAHDDGISLRNLDQAQIILLGVSRCGKTPTSLYLAMQYGIRAANYPFIADDMDNLSLPAALKAHQPKLFGLTIDPERLAAIRDERLSDSRYASLRQCRMEINEVESLFRNNNIRYLNSTNHSVEEIAAKIMDVLGMSRRMY.

153–160 (GVSRCGKT) is a binding site for ADP.

This sequence belongs to the pyruvate, phosphate/water dikinase regulatory protein family. PSRP subfamily.

It carries out the reaction [pyruvate, water dikinase] + ADP = [pyruvate, water dikinase]-phosphate + AMP + H(+). The catalysed reaction is [pyruvate, water dikinase]-phosphate + phosphate + H(+) = [pyruvate, water dikinase] + diphosphate. Functionally, bifunctional serine/threonine kinase and phosphorylase involved in the regulation of the phosphoenolpyruvate synthase (PEPS) by catalyzing its phosphorylation/dephosphorylation. The sequence is that of Putative phosphoenolpyruvate synthase regulatory protein from Sodalis glossinidius (strain morsitans).